The primary structure comprises 262 residues: Putative hydro-lyase Mflv_5194 (262 aa).

The protein belongs to the D-glutamate cyclase family.

The chain is Putative hydro-lyase Mflv_5194 from Mycolicibacterium gilvum (strain PYR-GCK) (Mycobacterium gilvum (strain PYR-GCK)).